Here is a 417-residue protein sequence, read N- to C-terminus: UDP-N-acetylglucosamine 1-carboxyvinyltransferase 3 (417 aa).

22–23 (KN) is a binding site for phosphoenolpyruvate. Residue Arg92 coordinates UDP-N-acetyl-alpha-D-glucosamine. Catalysis depends on Cys116, which acts as the Proton donor. Cys116 is subject to 2-(S-cysteinyl)pyruvic acid O-phosphothioketal. Residues 121–125 (RPIDQ), Asp304, and Ile326 contribute to the UDP-N-acetyl-alpha-D-glucosamine site.

The protein belongs to the EPSP synthase family. MurA subfamily.

It localises to the cytoplasm. The enzyme catalyses phosphoenolpyruvate + UDP-N-acetyl-alpha-D-glucosamine = UDP-N-acetyl-3-O-(1-carboxyvinyl)-alpha-D-glucosamine + phosphate. Its pathway is cell wall biogenesis; peptidoglycan biosynthesis. Cell wall formation. Adds enolpyruvyl to UDP-N-acetylglucosamine. The protein is UDP-N-acetylglucosamine 1-carboxyvinyltransferase 3 of Caldanaerobacter subterraneus subsp. tengcongensis (strain DSM 15242 / JCM 11007 / NBRC 100824 / MB4) (Thermoanaerobacter tengcongensis).